We begin with the raw amino-acid sequence, 683 residues long: Dynein, 78 kDa intermediate chain, flagellar outer arm (683 aa).

The interval 1–42 (MPALSPAKKGTDKGKTGKKTGKQEQNAQDYIPPPPPMPGDEA) is disordered. WD repeat units lie at residues 358–398 (HTES…DEPI), 407–450 (KLND…LIPE), 562–602 (DLND…LLPL), and 608–647 (VKKA…RITS).

This sequence belongs to the dynein intermediate chain family. As to quaternary structure, consists of at least 3 heavy chains (alpha, beta and gamma), 2 intermediate chains and 8 light chains.

It is found in the cytoplasm. It localises to the cytoskeleton. Its subcellular location is the flagellum axoneme. Functionally, is essential for arm assembly or attachment to the outer doublet microtubule. The sequence is that of Dynein, 78 kDa intermediate chain, flagellar outer arm (ODA9) from Chlamydomonas reinhardtii (Chlamydomonas smithii).